We begin with the raw amino-acid sequence, 205 residues long: Protease (205 aa).

Active-site residues include His54, Asp71, and Cys122.

The protein belongs to the peptidase C5 family. As to quaternary structure, interacts with protease cofactor pVI-C; this interaction is necessary for protease activation.

It is found in the virion. Its subcellular location is the host nucleus. The enzyme catalyses Cleaves proteins of the adenovirus and its host cell at two consensus sites: -Yaa-Xaa-Gly-Gly-|-Xaa- and -Yaa-Xaa-Gly-Xaa-|-Gly- (in which Yaa is Met, Ile or Leu, and Xaa is any amino acid).. With respect to regulation, requires DNA and protease cofactor for maximal activation. Inside nascent virions, becomes partially activated by binding to the viral DNA, allowing it to cleave the cofactor that binds to the protease and fully activates it. Actin, like the viral protease cofactor, seems to act as a cofactor in the cleavage of cytokeratin 18 and of actin itself. Its function is as follows. Cleaves viral precursor proteins (pTP, pIIIa, pVI, pVII, pVIII, and pX) inside newly assembled particles giving rise to mature virions. Protease complexed to its cofactor slides along the viral DNA to specifically locate and cleave the viral precursors. Mature virions have a weakened organization compared to the unmature virions, thereby facilitating subsequent uncoating. Without maturation, the particle lacks infectivity and is unable to uncoat. Late in adenovirus infection, in the cytoplasm, may participate in the cytoskeleton destruction. Cleaves host cell cytoskeletal keratins K7 and K18. This chain is Protease, found in Homo sapiens (Human).